Here is an 843-residue protein sequence, read N- to C-terminus: MALPRCMWPNYVWRAMMACVVHRGSGAPLTLCLLGCLLQTFHVLSQKLDDVDPLVTTNFGKIRGIKKELNNEILGPVIQFLGVPYAAPPTGEHRFQPPEPPSPWSDIRNATQFAPVCPQNIIDGRLPEVMLPVWFTNNLDVVSSYVQDQSEDCLYLNIYVPTEDGPLTKKHTDDLGDNDGAEDEDIRDSGGPKPVMVYIHGGSYMEGTGNLYDGSVLASYGNVIVITVNYRLGVLGFLSTGDQAAKGNYGLLDLIQALRWTSENIGFFGGDPLRITVFGSGAGGSCVNLLTLSHYSEGNRWSNSTKGLFQRAIAQSGTALSSWAVSFQPAKYARILATKVGCNVSDTVELVECLQKKPYKELVDQDVQPARYHIAFGPVIDGDVIPDDPQILMEQGEFLNYDIMLGVNQGEGLKFVENIVDSDDGVSASDFDFAVSNFVDNLYGYPEGKDVLRETIKFMYTDWADRHNPETRRKTLLALFTDHQWVAPAVATADLHSNFGSPTYFYAFYHHCQTDQVPAWADAAHGDEVPYVLGIPMIGPTELFPCNFSKNDVMLSAVVMTYWTNFAKTGDPNQPVPQDTKFIHTKPNRFEEVAWTRYSQKDQLYLHIGLKPRVKEHYRANKVNLWLELVPHLHNLNDISQYTSTTTKVPSTDITLRPTRKNSTPVTSAFPTAKQDDPKQQPSPFSVDQRDYSTELSVTIAVGASLLFLNILAFAALYYKKDKRRHDVHRRCSPQRTTTNDLTHAPEEEIMSLQMKHTDLDHECESIHPHEVVLRTACPPDYTLAMRRSPDDIPLMTPNTITMIPNTIPGIQPLHTFNTFTGGQNNTLPHPHPHPHSHSTTRV.

A signal peptide spans 1–45 (MALPRCMWPNYVWRAMMACVVHRGSGAPLTLCLLGCLLQTFHVLS). Residues 46-697 (QKLDDVDPLV…DQRDYSTELS (652 aa)) are Extracellular-facing. The N-linked (GlcNAc...) (complex) asparagine glycan is linked to Asn-109. The cysteines at positions 117 and 153 are disulfide-linked. The disordered stretch occupies residues 167-190 (LTKKHTDDLGDNDGAEDEDIRDSG). Positions 175 to 186 (LGDNDGAEDEDI) are enriched in acidic residues. N-linked (GlcNAc...) (complex) asparagine glycosylation is found at Asn-303 and Asn-343. Intrachain disulfides connect Cys-342–Cys-353 and Cys-512–Cys-546. N-linked (GlcNAc...) asparagine glycosylation is present at Asn-547. The interval 647 to 688 (TKVPSTDITLRPTRKNSTPVTSAFPTAKQDDPKQQPSPFSVD) is disordered. The span at 661 to 670 (KNSTPVTSAF) shows a compositional bias: polar residues. Ser-683 and Ser-686 each carry an O-linked (GalNAc...) serine glycan. Residues 698 to 718 (VTIAVGASLLFLNILAFAALY) form a helical membrane-spanning segment. The Cytoplasmic portion of the chain corresponds to 719–843 (YKKDKRRHDV…HPHSHSTTRV (125 aa)). The disordered stretch occupies residues 822–843 (GGQNNTLPHPHPHPHSHSTTRV). Residues 831 to 843 (PHPHPHSHSTTRV) show a composition bias toward basic residues.

Belongs to the type-B carboxylesterase/lipase family. In terms of assembly, interacts with neurexins NRXN1, NRXN2 and NRXN3. Interaction with neurexins is mediated by heparan sulfate glycan modification on neurexin. Interacts (via its C-terminus) with DLG4/PSD-95 (via PDZ domain 3). Interacts with AIP1, GOPC and PDZRN3. Interacts with NLGN3. As to expression, brain and arteries (at protein level). Expressed in olfactory bulb. Detected in brain.

Its subcellular location is the cell membrane. The protein localises to the postsynaptic density. It is found in the synaptic cleft. The protein resides in the synaptic cell membrane. Functionally, cell surface protein involved in cell-cell-interactions via its interactions with neurexin family members. Plays a role in synapse function and synaptic signal transmission, and probably mediates its effects by recruiting and clustering other synaptic proteins. May promote the initial formation of synapses, but is not essential for this. In vitro, triggers the de novo formation of presynaptic structures. May be involved in specification of excitatory synapses. Required to maintain wakefulness quality and normal synchrony of cerebral cortex activity during wakefulness and sleep. The protein is involved in nervous system development. This is Neuroligin-1 (Nlgn1) from Mus musculus (Mouse).